The primary structure comprises 43 residues: DRDSCVDKSKCGKYGYYHQCDECCKKAGDRAGNCVYYKCKCNP.

Intrachain disulfides connect C5/C23, C11/C34, C20/C39, and C24/C41.

Belongs to the ergtoxin family. Gamma-KTx 4 subfamily. Expressed by the venom gland.

Its subcellular location is the secreted. Functionally, reversibly blocks Kv11/ERG potassium channels. This Centruroides elegans (Bark scorpion) protein is Potassium channel toxin gamma-KTx 4.8.